Consider the following 678-residue polypeptide: Vacuolar protein sorting-associated protein 1 (678 aa).

The Dynamin-type G domain maps to 24-311; that stretch reads LIDLPQITVV…LMHHIRNTLP (288 aa). Positions 34–41 are G1 motif; sequence RSQSSGKS. Position 34 to 41 (34 to 41) interacts with GTP; the sequence is RSQSSGKS. The segment at 60–62 is G2 motif; it reads VTR. The interval 71-96 is disordered; sequence NRPSASGKNEETTTDSDGKDQNNSSE. Residues 78–90 show a composition bias toward basic and acidic residues; the sequence is KNEETTTDSDGKD. The segment at 153–156 is G3 motif; the sequence is DLPG. Residues 153-157 and 222-225 contribute to the GTP site; these read DLPGL and TKVD. The interval 222-225 is G4 motif; it reads TKVD. Positions 252–255 are G5 motif; it reads INRG. A GED domain is found at 592–678; sequence TEVIKLLIMS…LQASEIVSNV (87 aa).

It belongs to the TRAFAC class dynamin-like GTPase superfamily. Dynamin/Fzo/YdjA family.

This is Vacuolar protein sorting-associated protein 1 (vps1) from Schizosaccharomyces pombe (strain 972 / ATCC 24843) (Fission yeast).